The following is a 291-amino-acid chain: DegV domain-containing protein CPE0026 (291 aa).

In terms of domain architecture, DegV spans 4–286 (FVIFTDSAAD…IGTLAVFFLG (283 aa)). Thr63 and Ser95 together coordinate hexadecanoate.

May bind long-chain fatty acids, such as palmitate, and may play a role in lipid transport or fatty acid metabolism. In Clostridium perfringens (strain 13 / Type A), this protein is DegV domain-containing protein CPE0026.